A 188-amino-acid chain; its full sequence is UPF0200 protein YG5714_1176 (188 aa).

G15 to S22 lines the ATP pocket.

It belongs to the UPF0200 family.

This Saccharolobus islandicus (strain Y.G.57.14 / Yellowstone #1) (Sulfolobus islandicus) protein is UPF0200 protein YG5714_1176.